Consider the following 338-residue polypeptide: Acetylcholinesterase (338 aa).

N-linked (GlcNAc...) asparagine glycosylation occurs at Asn-8. Ser-99 functions as the Acyl-ester intermediate in the catalytic mechanism. Cys-153 and Cys-164 form a disulfide bridge. Glu-226 (charge relay system) is an active-site residue.

It belongs to the type-B carboxylesterase/lipase family.

It localises to the synapse. The protein resides in the secreted. It is found in the cell membrane. It carries out the reaction acetylcholine + H2O = choline + acetate + H(+). Its function is as follows. Terminates signal transduction at the neuromuscular junction by rapid hydrolysis of the acetylcholine released into the synaptic cleft. The sequence is that of Acetylcholinesterase (ache) from Myxine glutinosa (Atlantic hagfish).